Here is a 425-residue protein sequence, read N- to C-terminus: Histone-binding protein RBBP4 (425 aa).

N-acetylalanine is present on alanine 2. WD repeat units follow at residues 32–125 (YDLV…NHEG), 126–175 (EVNR…RLRG), 176–223 (HQKE…KTIF), 225–270 (GHTA…HSVD), 271–314 (AHTA…HSFE), 315–371 (SHKD…FIHG), and 372–404 (GHTA…VWQM).

This sequence belongs to the WD repeat RBAP46/RBAP48/MSI1 family. In terms of assembly, binds directly to histone H4, probably via helix 1 of the histone fold, a region that is not accessible when histone H4 is in chromatin. Forms a large corepressor complex that contains ncor1, sin3a and possibly sin3b, histone deacetylases hdac2, hdac1, rbbp4 and possibly rbbp7.

It localises to the nucleus. The protein resides in the chromosome. Its subcellular location is the telomere. In terms of biological role, core histone-binding subunit that may target chromatin assembly factors, chromatin remodeling factors and histone deacetylases to their histone substrates in a manner that is regulated by nucleosomal DNA. Component of several complexes which regulate chromatin metabolism. The polypeptide is Histone-binding protein RBBP4 (rbbp4) (Xenopus tropicalis (Western clawed frog)).